Reading from the N-terminus, the 108-residue chain is MLKTTLLFFVTALCEIIGCFLPWLWLKRGASVWWLLPAAASLALFVWLLTLHPAASGRVYAAYGGVYVCTALLWLRVVDGVRLTVYDWCGALIALCGMLIIVVGWGRT.

Over 1–5 (MLKTT) the chain is Periplasmic. The helical transmembrane segment at 6-26 (LLFFVTALCEIIGCFLPWLWL) threads the bilayer. Residues 27-30 (KRGA) are Cytoplasmic-facing. A helical membrane pass occupies residues 31–51 (SVWWLLPAAASLALFVWLLTL). Residues 52–60 (HPAASGRVY) lie on the Periplasmic side of the membrane. A helical membrane pass occupies residues 61–81 (AAYGGVYVCTALLWLRVVDGV). The Cytoplasmic portion of the chain corresponds to 82–84 (RLT). Residues 85–105 (VYDWCGALIALCGMLIIVVGW) traverse the membrane as a helical segment. At 106–108 (GRT) the chain is on the periplasmic side.

It belongs to the UPF0060 family.

Its subcellular location is the cell inner membrane. The polypeptide is UPF0060 membrane protein YnfA (Salmonella agona (strain SL483)).